The primary structure comprises 377 residues: Mucin-7 (377 aa).

The signal sequence occupies residues 1-22 (MKTLPLFVCICALSACFSFSEG). Positions 70–100 (CRPKLPPSPNNPPKFPNPHQPPKHPDKNSSV) are disordered. The span at 73-89 (KLPPSPNNPPKFPNPHQ) shows a compositional bias: pro residues. N-linked (GlcNAc...) asparagine glycans are attached at residues Asn97, Asn128, Asn135, and Asn146. The tract at residues 150 to 355 (SVATLAPVNS…QPTSAPGQNK (206 aa)) is disordered. Tandem repeats lie at residues 165–187 (TTAAPPTPSATTPAPPSSSAPPE), 188–210 (TTAAPPTPSATTQAPPSSSAPPE), 211–233 (TTAAPPTPPATTPAPPSSSAPPE), 234–256 (TTAAPPTPSATTPAPLSSSAPPE), 257–279 (TTAVPPTPSATTLDPSSASAPPE), and 280–302 (TTAAPPTPSATTPAPPSSPAPQE). The span at 169-183 (PPTPSATTPAPPSSS) shows a compositional bias: pro residues. Thr176 is a glycosylation site (O-linked (GalNAc) threonine; by GALNT13). 2 O-linked (GalNAc) serine; by GALNT13 glycosylation sites follow: Ser182 and Ser183. Over residues 184 to 214 (APPETTAAPPTPSATTQAPPSSSAPPETTAA) the composition is skewed to low complexity. Thr188 and Thr189 each carry an O-linked (GalNAc) threonine; by GALNT13 glycan. Residues 215–229 (PPTPPATTPAPPSSS) show a composition bias toward pro residues. The span at 230–283 (APPETTAAPPTPSATTPAPLSSSAPPETTAVPPTPSATTLDPSSASAPPETTAA) shows a compositional bias: low complexity. The segment covering 284-298 (PPTPSATTPAPPSSP) has biased composition (pro residues). Residues 309-329 (TTPNSSPTTLAPDTSETSAAP) are compositionally biased toward polar residues. Low complexity predominate over residues 330–348 (THQTTTSVTTQTTTTKQPT).

In terms of assembly, monomer. Post-translationally, N- and O-glycosylated. Contains fucose, mannose, galactose, N-acetylglucosamine and N-acetylgalactosamine. In terms of tissue distribution, expressed in salivary gland tissues and only in those that contain mucous acinar cells (e.g. sublingual and submandibular glands) and not in salivary glands containing only serous acinar cells (e.g. parotid gland).

The protein localises to the secreted. In terms of biological role, may function in a protective capacity by promoting the clearance of bacteria in the oral cavity and aiding in mastication, speech, and swallowing. Binds P.aeruginosa pili. The chain is Mucin-7 (MUC7) from Homo sapiens (Human).